Reading from the N-terminus, the 556-residue chain is Oxygen-dependent choline dehydrogenase (556 aa).

6 to 35 provides a ligand contact to FAD; it reads DYIIIGAGSAGNVLAARLTEDPGVTVLLLE. H475 acts as the Proton acceptor in catalysis.

Belongs to the GMC oxidoreductase family. FAD serves as cofactor.

The enzyme catalyses choline + A = betaine aldehyde + AH2. It carries out the reaction betaine aldehyde + NAD(+) + H2O = glycine betaine + NADH + 2 H(+). Its pathway is amine and polyamine biosynthesis; betaine biosynthesis via choline pathway; betaine aldehyde from choline (cytochrome c reductase route): step 1/1. Involved in the biosynthesis of the osmoprotectant glycine betaine. Catalyzes the oxidation of choline to betaine aldehyde and betaine aldehyde to glycine betaine at the same rate. The sequence is that of Oxygen-dependent choline dehydrogenase from Xanthomonas axonopodis pv. citri (strain 306).